Here is an 84-residue protein sequence, read N- to C-terminus: CLAVATA3/ESR (CLE)-related protein 13 (84 aa).

Residues 1–29 form the signal peptide; the sequence is MGRYTTDQVQVYVLVIVLCTFFSTLQARS. Positions 57 to 84 are disordered; the sequence is KQVRDISGDRLSPAGPDPQHNGRSPPRK. Hydroxyproline is present on residues Pro69 and Pro72. An O-linked (Ara...) hydroxyproline glycan is attached at Pro72.

It belongs to the CLV3/ESR signal peptide family. Post-translationally, the O-glycosylation (arabinosylation) of the hydroxyproline Pro-72 enhances binding affinity of the CLE13p peptide for its receptor. In terms of tissue distribution, expressed in young nodules throughout the central tissue. Expressed in the apical region of elongated nodules, corresponding to the meristematic and early infection zones.

Its subcellular location is the secreted. The protein localises to the extracellular space. In terms of biological role, signaling peptide involved in the regulation of nodulation. Moves from root to shoot to function with the receptor kinase SUNN, in a signaling pathway that plays roles during cellular differentiation, both at the onset of nodulation, and later during nodule meristem development and subsequent homeostasis. Interacts with SUNN signaling to control nodule numbers. SUNN is involved in the autoregulation of nodulation (AON), a long distance systemic signaling from root to shoot and back again, which allows legumes to limit the number of root nodules formed based on available nitrogen and previous rhizobial colonization. The protein is CLAVATA3/ESR (CLE)-related protein 13 of Medicago truncatula (Barrel medic).